Here is a 118-residue protein sequence, read N- to C-terminus: Protein TusC (118 aa).

Belongs to the DsrF/TusC family. As to quaternary structure, heterohexamer, formed by a dimer of trimers. The hexameric TusBCD complex contains 2 copies each of TusB, TusC and TusD. The TusBCD complex interacts with TusE.

Its subcellular location is the cytoplasm. In terms of biological role, part of a sulfur-relay system required for 2-thiolation of 5-methylaminomethyl-2-thiouridine (mnm(5)s(2)U) at tRNA wobble positions. This is Protein TusC from Salmonella typhi.